The following is a 473-amino-acid chain: Probable serine/threonine-protein kinase glkA (473 aa).

A disordered region spans residues 1-84 (MTIPTDNNSS…QSSSTATVNS (84 aa)). Low complexity predominate over residues 7–84 (NNSSNNKGYN…QSSSTATVNS (78 aa)). Residues 91-366 (YEIIKQVGQG…IDEIIAHPFL (276 aa)) form the Protein kinase domain. Residues 97–105 (VGQGTFGKV) and K119 each bind ATP. D208 functions as the Proton acceptor in the catalytic mechanism. Disordered regions lie at residues 389–418 (GKSS…SNNK) and 437–473 (SSNL…TNTI). The segment covering 442 to 466 (SIDNSNNGKSSSSSNNIPSLNNSNN) has biased composition (low complexity).

It belongs to the protein kinase superfamily. CMGC Ser/Thr protein kinase family. GSK-3 subfamily.

It carries out the reaction L-seryl-[tau protein] + ATP = O-phospho-L-seryl-[tau protein] + ADP + H(+). The catalysed reaction is L-threonyl-[tau protein] + ATP = O-phospho-L-threonyl-[tau protein] + ADP + H(+). This is Probable serine/threonine-protein kinase glkA (glkA) from Dictyostelium discoideum (Social amoeba).